The chain runs to 65 residues: Large ribosomal subunit protein bL32 (65 aa).

The span at 1–19 shows a compositional bias: basic residues; it reads MAVQKSRKTPSKRGMRRSH. Positions 1–32 are disordered; that stretch reads MAVQKSRKTPSKRGMRRSHNALVKSTLSEDQE.

This sequence belongs to the bacterial ribosomal protein bL32 family.

The sequence is that of Large ribosomal subunit protein bL32 from Vesicomyosocius okutanii subsp. Calyptogena okutanii (strain HA).